The primary structure comprises 609 residues: MKNLSFLINRRKENTSDSNVYPGKAKSHEPSWIEMDDQTKKDGLDIVHVEFSPDTRAPSDSNKVITEIFDATEDAKEADESERGMPLATALNTYPKAAAWSLLVSTTLIMEGYDTAILGAFYALPIFQRKFGSQNDKTGEWEISASWQIGLTLCYMAGEIVGLQLTGPSVDLVGNRYTLIIALFFLAAFTFILYFCNSLGMIAVGQALCGMPWGCFQCLTVSYASEICPLALRYYLTTYSNLCWLFGQLFAAGIMKNSQKKYADSELGYKLPFALQWILPVPLALGIFFAPESPWWLVKKGRFDEARRSLRRTLSGKGPEKEILVTLEVDKIKVTIDKEKRLTSKEGSYSDCFEDKINRRRTRITCLCWAGQATCGSILIGYSTYFYEKAGVSTEMSFTFSIIQYCLGICATFLSWWASKYFGRYDLYAFGLAFQTIVFFIIGGLGCSSTHGSKMGSGSLLMAVAFFYNLGIAPVVFCLVSEMPSSRLRTKTIILARNTYNVVSIICSVLILYQLNSKKWNWGAKSGFFWGVLCFCTLIWAVVDLPETAGKTFVEINELFKLGVSARKFKSTKVDPFVVKTPLKTSLITTPREISKLPLQRNSNVSHHL.

Over 1 to 106 the chain is Cytoplasmic; it reads MKNLSFLINR…AAAWSLLVST (106 aa). A helical membrane pass occupies residues 107–127; it reads TLIMEGYDTAILGAFYALPIF. Over 128-142 the chain is Extracellular; that stretch reads QRKFGSQNDKTGEWE. The chain crosses the membrane as a helical span at residues 143 to 163; that stretch reads ISASWQIGLTLCYMAGEIVGL. Topologically, residues 164–178 are cytoplasmic; that stretch reads QLTGPSVDLVGNRYT. Residues 179–199 form a helical membrane-spanning segment; the sequence is LIIALFFLAAFTFILYFCNSL. G200 is a topological domain (extracellular). Residues 201-221 traverse the membrane as a helical segment; sequence MIAVGQALCGMPWGCFQCLTV. The Cytoplasmic segment spans residues 222–234; sequence SYASEICPLALRY. A helical membrane pass occupies residues 235–255; sequence YLTTYSNLCWLFGQLFAAGIM. The Extracellular segment spans residues 256-270; sequence KNSQKKYADSELGYK. A helical membrane pass occupies residues 271-291; sequence LPFALQWILPVPLALGIFFAP. Topologically, residues 292-363 are cytoplasmic; sequence ESPWWLVKKG…EDKINRRRTR (72 aa). A helical membrane pass occupies residues 364–384; sequence ITCLCWAGQATCGSILIGYST. The Extracellular segment spans residues 385-397; the sequence is YFYEKAGVSTEMS. Residues 398–418 form a helical membrane-spanning segment; sequence FTFSIIQYCLGICATFLSWWA. The Cytoplasmic segment spans residues 419–426; sequence SKYFGRYD. A helical transmembrane segment spans residues 427–447; sequence LYAFGLAFQTIVFFIIGGLGC. The Extracellular portion of the chain corresponds to 448 to 459; that stretch reads SSTHGSKMGSGS. The chain crosses the membrane as a helical span at residues 460–480; the sequence is LLMAVAFFYNLGIAPVVFCLV. Residues 481–492 are Cytoplasmic-facing; that stretch reads SEMPSSRLRTKT. The chain crosses the membrane as a helical span at residues 493–513; it reads IILARNTYNVVSIICSVLILY. Over 514-525 the chain is Extracellular; sequence QLNSKKWNWGAK. The chain crosses the membrane as a helical span at residues 526 to 546; that stretch reads SGFFWGVLCFCTLIWAVVDLP. Over 547 to 609 the chain is Cytoplasmic; sequence ETAGKTFVEI…QRNSNVSHHL (63 aa).

It belongs to the major facilitator superfamily. Sugar transporter (TC 2.A.1.1) family.

It localises to the cell membrane. Functionally, high-affinity uptake of maltose and maltotriose. Also transports alpha-methylglucoside, glucose and turanose but not melezitose or trehalose. This is Alpha-glucosides permease MPH2 (MPH2) from Saccharomyces cerevisiae (strain ATCC 204508 / S288c) (Baker's yeast).